The primary structure comprises 632 residues: Actin-related protein 8 (632 aa).

The segment covering 1–30 (MTQAEREQENGKEKEKEREKEKEKEKEQRG) has biased composition (basic and acidic residues). A disordered region spans residues 1–43 (MTQAEREQENGKEKEKEREKEKEKEKEQRGIKRPIAPPVIPEP). 288–291 (DVGD) is an ATP binding site. 2 disordered regions span residues 410 to 429 (MTSLQHRSQGDPEDPHDEHY) and 434 to 494 (QSKQ…GGAE). Over residues 434-443 (QSKQDQSSKA) the composition is skewed to low complexity.

This sequence belongs to the actin family. ARP8 subfamily. Component of the chromatin remodeling INO80 complex; specifically part of a complex module associated with the DBINO domain of INO80. Exists as monomers and dimers, but the dimer is most probably the biologically relevant form required for stable interactions with histones that exploits the twofold symmetry of the nucleosome core.

The protein resides in the nucleus. It localises to the chromosome. Its function is as follows. Plays an important role in the functional organization of mitotic chromosomes. Exhibits low basal ATPase activity, and unable to polymerize. Functionally, proposed core component of the chromatin remodeling INO80 complex which is involved in transcriptional regulation, DNA replication and probably DNA repair. Required for the recruitment of INO80 (and probably the INO80 complex) to sites of DNA damage Strongly prefer nucleosomes and H3-H4 tetramers over H2A-H2B dimers, suggesting it may act as a nucleosome recognition module within the complex. The protein is Actin-related protein 8 (actr8) of Salmo salar (Atlantic salmon).